We begin with the raw amino-acid sequence, 239 residues long: Myogenic factor 6 (239 aa).

The segment at 28–64 is disordered; it reads HLDMSGVSPLYNGNDSPLSPGQDNVPSETGGESSGDE. Over residues 38-58 the composition is skewed to polar residues; the sequence is YNGNDSPLSPGQDNVPSETGG. The region spanning 96–147 is the bHLH domain; it reads DRRKAATLRERRRLKKINEAFDALKRKTVANPNQRLPKVEILRSAISYIERL. The segment at 155–189 is disordered; it reads DEQERSQSGASDTRNDKEQNRPSGGDYRWKKASNT.

In terms of assembly, efficient DNA binding requires dimerization with another bHLH protein.

The protein resides in the nucleus. Its function is as follows. Involved in muscle differentiation (myogenic factor). Induces fibroblasts to differentiate into myoblasts. Probable sequence specific DNA-binding protein. This chain is Myogenic factor 6 (myf6), found in Takifugu rubripes (Japanese pufferfish).